Consider the following 235-residue polypeptide: RAD9, HUS1, RAD1-interacting nuclear orphan protein 1 (235 aa).

S50 carries the post-translational modification Phosphoserine. The short motif at 54–60 is the RAD1-binding motif element; the sequence is SWVSPQF. Disordered regions lie at residues 75 to 106, 111 to 130, and 149 to 198; these read HRDQ…SETL, RVQP…VPLF, and VFAP…LVKD. Polar residues predominate over residues 96–106; it reads ESPQSSSSETL. A D-box motif is present at residues 123-130; the sequence is RRPLVPLF. Residues 161–173 show a composition bias toward basic and acidic residues; sequence SVRDDPISPDQKE. Positions 171-175 match the KEN box motif; the sequence is QKENS.

As to quaternary structure, interacts (when phosphorylated by PLK1) with POLQ; promoting POLQ recruitment to DNA damage sites. Interacts with RAD1; interaction is direct and promotes association with the 9-1-1 (RAD9-RAD1-HUS1) complex. Interacts with RAD18. Interacts with TOPBP1. Interacts with UBE2N. Post-translationally, phosphorylated at Ser-50 by PLK1, promoting interaction with polymerase theta (POLQ). Ubiquitinated and degraded by the APC/C complex upon mitotic exit.

Its subcellular location is the nucleus. The protein resides in the chromosome. Functionally, involved in microhomology-mediated end-joining (MMEJ) DNA repair by promoting recruitment of polymerase theta (POLQ) to DNA damage sites during mitosis. MMEJ is an alternative non-homologous end-joining (NHEJ) machinery that takes place during mitosis to repair double-strand breaks in DNA that originate in S-phase. Accumulates in M-phase; following phosphorylation by PLK1, interacts with POLQ, enabling its recruitment to double-strand breaks for subsequent repair. Also involved in the DNA damage response (DDR) signaling in response to genotoxic stresses such as ionizing radiation (IR) during the S phase. Recruited to sites of DNA damage through interaction with the 9-1-1 cell-cycle checkpoint response complex and TOPBP1 in a ATR-dependent manner. Required for the progression of the G1 to S phase transition. Plays a role in the stimulation of CHEK1 phosphorylation. This Mus musculus (Mouse) protein is RAD9, HUS1, RAD1-interacting nuclear orphan protein 1 (Rhno1).